The sequence spans 97 residues: Coiled-coil domain-containing protein 167 (97 aa).

The stretch at glycine 10 to leucine 79 forms a coiled coil. Residues asparagine 77 to leucine 97 traverse the membrane as a helical segment.

Its subcellular location is the membrane. This Bos taurus (Bovine) protein is Coiled-coil domain-containing protein 167 (CCDC167).